We begin with the raw amino-acid sequence, 352 residues long: MRQIVSTFLFVTVVSGTIIVVSSENWFIIWVGLELSTLALVPILCSGFSPRNVEADNKYFLVQASSAALLLNGALGQAWLTGSWSILDPVNEVTSICLSIALAFKIGLAPVHFWFPDVLQGLPFFQGLIIATWQKIAPLILMFYFSQLGFSYLLITPSLISVLIGGWGGLNQTQVRKILAFSSIGNMGWLVITSAYSFNAAIIMLVIYLIINTSLFLLFDHLKVSTLGHLNTISQLSPISVALVLLVMLSLGGLPPLTGFILKFTSLYFLVANNFIILSSIMIIGNLQDYFFYLRISFNTSLFLFPQHIISSASWRNSTIISPLAPKAWLSSVSTVLSTLAIPLTLPLYIIT.

Helical transmembrane passes span 4–24, 26–46, 67–87, 96–116, 124–144, 148–168, 177–197, 198–218, 241–261, 264–284, 290–310, and 332–352; these read IVST…VSSE, WFII…ILCS, AALL…WSIL, ICLS…FWFP, FFQG…LMFY, LGFS…GGWG, KILA…SAYS, FNAA…LFLL, VALV…TGFI, FTSL…IMII, YFFY…QHII, and SVST…YIIT.

The protein belongs to the complex I subunit 2 family.

It localises to the mitochondrion inner membrane. The catalysed reaction is a ubiquinone + NADH + 5 H(+)(in) = a ubiquinol + NAD(+) + 4 H(+)(out). Its function is as follows. Core subunit of the mitochondrial membrane respiratory chain NADH dehydrogenase (Complex I) that is believed to belong to the minimal assembly required for catalysis. Complex I functions in the transfer of electrons from NADH to the respiratory chain. The immediate electron acceptor for the enzyme is believed to be ubiquinone. The chain is NADH-ubiquinone oxidoreductase chain 2 (ND2) from Strongylocentrotus purpuratus (Purple sea urchin).